Reading from the N-terminus, the 238-residue chain is N-acetylneuraminic acid outer membrane channel protein NanC (238 aa).

Residues 1-23 form the signal peptide; that stretch reads MKKAKILSGVLLLCFSSPLISQA. At 24 to 25 the chain is on the periplasmic side; it reads AT. At 26–32 the chain is embedded in the membrane; the sequence is LDVRGGY. Over 33–39 the chain is Extracellular; sequence RSGSHAY. Positions 40–49 form a transmembrane segment; sequence ETRLKVSEGW. Residues 50–52 lie on the Periplasmic side of the membrane; that stretch reads QNG. At 53–61 the chain is embedded in the membrane; sequence WWASMESNT. The Extracellular portion of the chain corresponds to 62–76; the sequence is WNTIHDNKKENAALN. A transmembrane span lies at residues 77–86; it reads DVQVEVNYAI. Residues 87-91 are Periplasmic-facing; it reads KLDDQ. Positions 92-102 form a transmembrane segment; the sequence is WTVRPGMLTHF. The Extracellular segment spans residues 103–107; sequence SSNGT. At 108–117 the chain is embedded in the membrane; that stretch reads RYGPYVKLSW. At 118 to 122 the chain is on the periplasmic side; it reads DATKD. Residues 123–132 are membrane-embedded; the sequence is LKFGIRYRYD. Residues 133–151 lie on the Extracellular side of the membrane; sequence WKAYRQQDLSGDMSRDNVH. A membrane pass occupies residues 152–159; the sequence is RWDGYVTY. The Periplasmic portion of the chain corresponds to 160–164; it reads HINSD. The segment at 165–173 is a transmembrane helix; sequence FTFAWQTTL. The Extracellular portion of the chain corresponds to 174-190; that stretch reads YSKQNDYRYANHKKWAT. A membrane pass occupies residues 191–200; sequence ENAFVLQYHM. The Periplasmic segment spans residues 201-203; it reads TPD. Residues 204–212 are membrane-embedded; the sequence is ITPYIEYDY. The Extracellular segment spans residues 213–228; it reads LDRQGVYNGRDNLSEN. The hydrophobic stretch at 229–236 threads the membrane; that stretch reads SYRIGVSF. Residues 237–238 lie on the Periplasmic side of the membrane; it reads KL.

It belongs to the oligogalacturonate-specific porin KdgM (TC 1.B.35) family. NanC subfamily. In terms of assembly, monomer.

Its subcellular location is the cell outer membrane. It catalyses the reaction N-acetylneuraminate(in) = N-acetylneuraminate(out). Functionally, outer membrane channel protein allowing the entry of N-acetylneuraminic acid (Neu5Ac, the most abundant sialic acid on host cell surfaces) into the bacteria. NanC proteins form high-conductance channels which are open at low membrane potentials and which have a weak anion selectivity. This Escherichia coli O6:H1 (strain CFT073 / ATCC 700928 / UPEC) protein is N-acetylneuraminic acid outer membrane channel protein NanC (nanC).